Consider the following 262-residue polypeptide: Thiazole synthase (262 aa).

Residue K104 is the Schiff-base intermediate with DXP of the active site. Residues G165, 191 to 192 (AG), and 213 to 214 (NT) contribute to the 1-deoxy-D-xylulose 5-phosphate site.

The protein belongs to the ThiG family. Homotetramer. Forms heterodimers with either ThiH or ThiS.

Its subcellular location is the cytoplasm. The enzyme catalyses [ThiS sulfur-carrier protein]-C-terminal-Gly-aminoethanethioate + 2-iminoacetate + 1-deoxy-D-xylulose 5-phosphate = [ThiS sulfur-carrier protein]-C-terminal Gly-Gly + 2-[(2R,5Z)-2-carboxy-4-methylthiazol-5(2H)-ylidene]ethyl phosphate + 2 H2O + H(+). It functions in the pathway cofactor biosynthesis; thiamine diphosphate biosynthesis. Catalyzes the rearrangement of 1-deoxy-D-xylulose 5-phosphate (DXP) to produce the thiazole phosphate moiety of thiamine. Sulfur is provided by the thiocarboxylate moiety of the carrier protein ThiS. In vitro, sulfur can be provided by H(2)S. In Nitrosococcus oceani (strain ATCC 19707 / BCRC 17464 / JCM 30415 / NCIMB 11848 / C-107), this protein is Thiazole synthase.